The sequence spans 265 residues: Hydroxyethylthiazole kinase (265 aa).

Position 50 (M50) interacts with substrate. ATP is bound by residues R125 and T171. G198 is a binding site for substrate.

The protein belongs to the Thz kinase family. Requires Mg(2+) as cofactor.

It carries out the reaction 5-(2-hydroxyethyl)-4-methylthiazole + ATP = 4-methyl-5-(2-phosphooxyethyl)-thiazole + ADP + H(+). The protein operates within cofactor biosynthesis; thiamine diphosphate biosynthesis; 4-methyl-5-(2-phosphoethyl)-thiazole from 5-(2-hydroxyethyl)-4-methylthiazole: step 1/1. Functionally, catalyzes the phosphorylation of the hydroxyl group of 4-methyl-5-beta-hydroxyethylthiazole (THZ). This chain is Hydroxyethylthiazole kinase, found in Salmonella paratyphi A (strain ATCC 9150 / SARB42).